The chain runs to 221 residues: Thiol:disulfide interchange protein TlpA (221 aa).

Residues Met-1–Arg-11 lie on the Cytoplasmic side of the membrane. A helical membrane pass occupies residues Ile-12 to Leu-35. Over Ser-36–Leu-221 the chain is Periplasmic. 2 disulfides stabilise this stretch: Cys-45-Cys-190 and Cys-107-Cys-110. Residues Ala-69–Gly-215 form the Thioredoxin domain.

The protein belongs to the thioredoxin family. In terms of assembly, monomer.

The protein localises to the cell membrane. Its function is as follows. Involved in cytochrome aa3 assembly. The polypeptide is Thiol:disulfide interchange protein TlpA (tlpA) (Bradyrhizobium diazoefficiens (strain JCM 10833 / BCRC 13528 / IAM 13628 / NBRC 14792 / USDA 110)).